A 203-amino-acid chain; its full sequence is Suppressor/enhancer of lin-12 protein 9 (203 aa).

The first 18 residues, Met1 to Ser18, serve as a signal peptide directing secretion. Over Tyr19–Arg170 the chain is Lumenal. Residues Glu28–Ile110 form the GOLD domain. Residues Val171–Phe191 traverse the membrane as a helical segment. Over Tyr192–Val203 the chain is Cytoplasmic.

It belongs to the EMP24/GP25L family.

The protein resides in the cytoplasmic vesicle membrane. The protein localises to the cytoplasmic vesicle. It is found in the COPI-coated vesicle membrane. It localises to the golgi apparatus membrane. In terms of biological role, may have a role in the negative regulation of lin-12 and glp-1 transport to the cell surface. May also have a role in a quality control mechanism for endoplasmic reticulum-Golgi transport; the budding of coatomer-coated and other species of coated vesicles, could bind cargo molecules to collect them into budding vesicles. Involved in regulating the expression of proteasomal subunits such as rpt-3 in order to confer resistance to proteasomal dysfunction. The chain is Suppressor/enhancer of lin-12 protein 9 (sel-9) from Caenorhabditis elegans.